A 213-amino-acid polypeptide reads, in one-letter code: Thymidylate kinase (213 aa).

10-17 serves as a coordination point for ATP; that stretch reads GLEGAGKT.

The protein belongs to the thymidylate kinase family.

It catalyses the reaction dTMP + ATP = dTDP + ADP. Its function is as follows. Phosphorylation of dTMP to form dTDP in both de novo and salvage pathways of dTTP synthesis. In Klebsiella pneumoniae subsp. pneumoniae (strain ATCC 700721 / MGH 78578), this protein is Thymidylate kinase.